The sequence spans 203 residues: E3 ubiquitin-protein ligase rnf152-A (203 aa).

An RING-type; degenerate zinc finger spans residues 12 to 55 (CQICFNYYSPRRRPKLLDCKRTCCSVCLQQMRACQKDLRCPWCR). Residues 167 to 187 (SGICTVILVACVLVFLLGIVL) traverse the membrane as a helical segment.

The protein belongs to the RNF152 family.

It localises to the lysosome membrane. The catalysed reaction is S-ubiquitinyl-[E2 ubiquitin-conjugating enzyme]-L-cysteine + [acceptor protein]-L-lysine = [E2 ubiquitin-conjugating enzyme]-L-cysteine + N(6)-ubiquitinyl-[acceptor protein]-L-lysine.. The protein operates within protein modification; protein ubiquitination. Its function is as follows. E3 ubiquitin-protein ligase that acts as a negative regulator of mTORC1 signaling by mediating ubiquitination of RagA/RRAGA and RHEB. Catalyzes 'Lys-63'-linked polyubiquitination of RagA/RRAGA in response to amino acid starvation, thereby regulating mTORC1 signaling. Also mediates monoubiquitination of RHEB, promoting its association with the TSC-TBC complex and subsequent inhibition. Also mediates 'Lys-48'-linked polyubiquitination of target proteins and their subsequent targeting to the proteasome for degradation. In Xenopus laevis (African clawed frog), this protein is E3 ubiquitin-protein ligase rnf152-A.